Here is a 457-residue protein sequence, read N- to C-terminus: 6-phosphofructo-2-kinase/fructose-2,6-bisphosphatase (457 aa).

Residues 1–20 form a disordered region; sequence MEIPPGLETTKRKVAHSDEH. Residues 1 to 244 form a 6-phosphofructo-2-kinase region; sequence MEIPPGLETT…VYFLMNIHLL (244 aa). Residues 9-20 show a composition bias toward basic and acidic residues; it reads TTKRKVAHSDEH. 36-44 contributes to the ATP binding site; it reads GLPARGKTY. 2 residues coordinate beta-D-fructose 6-phosphate: arginine 69 and arginine 98. The active site involves aspartate 124. Threonine 126 and arginine 132 together coordinate beta-D-fructose 6-phosphate. The active site involves cysteine 154. Position 163–168 (163–168) interacts with ATP; the sequence is NVTDVK. Residues lysine 168, arginine 190, and tyrosine 194 each contribute to the beta-D-fructose 6-phosphate site. The segment at 245-457 is fructose-2,6-bisphosphatase; that stretch reads PRSIYLTRHG…QLPLCDSPRD (213 aa). Arginine 252 lines the beta-D-fructose 2,6-bisphosphate pocket. The Tele-phosphohistidine intermediate role is filled by histidine 253. 2 residues coordinate beta-D-fructose 2,6-bisphosphate: asparagine 259 and glycine 265. Glutamate 324 (proton donor/acceptor) is an active-site residue. Beta-D-fructose 2,6-bisphosphate-binding residues include tyrosine 335, arginine 349, lysine 353, tyrosine 364, glutamine 390, and arginine 394. 346–349 is a binding site for ATP; sequence ADDR. Residues 390 to 394 and tyrosine 426 contribute to the ATP site; that span reads QAVLR.

In the C-terminal section; belongs to the phosphoglycerate mutase family.

The enzyme catalyses beta-D-fructose 2,6-bisphosphate + H2O = beta-D-fructose 6-phosphate + phosphate. It carries out the reaction beta-D-fructose 6-phosphate + ATP = beta-D-fructose 2,6-bisphosphate + ADP + H(+). Synthesis and degradation of fructose 2,6-bisphosphate. The polypeptide is 6-phosphofructo-2-kinase/fructose-2,6-bisphosphatase (Caenorhabditis elegans).